A 51-amino-acid chain; its full sequence is Perinerin (51 aa).

In terms of biological role, antibacterial activity against both Gram-negative and Gram-positive bacteria. Shows marked activity against P.aeruginosa, B.megaterium, A.viridans, moderate activity against E.coli K-12, S.aureus and M.luteus, and minor activity against P.vulgaris. Antifungal activity against P.heliothis. The protein is Perinerin of Perinereis aibuhitensis (Korean lugworm).